Reading from the N-terminus, the 360-residue chain is Teichoic acids export ATP-binding protein TagH (360 aa).

The ABC transporter domain maps to 24 to 245 (LKAMFFPKTR…YEDYINWFNK (222 aa)). 59–66 (GINGSGKS) is an ATP binding site. The tract at residues 246-360 (LSKEEKEAHK…GDIDNSDVSL (115 aa)) is unknown. The tract at residues 270–290 (EEQENGKAGSGGDGTQPIVQP) is disordered.

This sequence belongs to the ABC transporter superfamily. Teichoic acids exporter (TC 3.A.1.104.1) family. As to quaternary structure, the complex is composed of two ATP-binding proteins (TagH) and two transmembrane proteins (TagG).

The protein localises to the cell membrane. The catalysed reaction is ATP + H2O + teichoic acidSide 1 = ADP + phosphate + teichoic acidSide 2.. Functionally, part of the ABC transporter complex TagGH involved in teichoic acids export. Responsible for energy coupling to the transport system. In Shouchella clausii (strain KSM-K16) (Alkalihalobacillus clausii), this protein is Teichoic acids export ATP-binding protein TagH.